The following is a 492-amino-acid chain: Fibroblast growth factor receptor substrate 3 (492 aa).

A lipid anchor (N-myristoyl glycine) is attached at Gly-2. The IRS-type PTB domain maps to 13 to 115 (VPDNHPTKFK…QCNSINVMEE (103 aa)). Disordered stretches follow at residues 153–173 (GEGP…RHPS), 338–455 (QLGG…SDSY), and 467–492 (SNLQ…DLPL).

Binds NTRK1. Binds FGFR1, NGFR, GRB2, PTPN11 and ERK2. In terms of processing, phosphorylated by ULK2 in vitro. Phosphorylated on tyrosine residues upon stimulation by BFGF or NGFB.

It localises to the membrane. In terms of biological role, adapter protein that links FGF and NGF receptors to downstream signaling pathways. Involved in the activation of MAP kinases. Down-regulates ERK2 signaling by interfering with the phosphorylation and nuclear translocation of ERK2. The protein is Fibroblast growth factor receptor substrate 3 (FRS3) of Homo sapiens (Human).